The following is a 117-amino-acid chain: Large ribosomal subunit protein bL20 (117 aa).

Belongs to the bacterial ribosomal protein bL20 family.

In terms of biological role, binds directly to 23S ribosomal RNA and is necessary for the in vitro assembly process of the 50S ribosomal subunit. It is not involved in the protein synthesizing functions of that subunit. The polypeptide is Large ribosomal subunit protein bL20 (Limosilactobacillus reuteri (strain DSM 20016) (Lactobacillus reuteri)).